Here is a 441-residue protein sequence, read N- to C-terminus: Zinc finger and BTB domain-containing protein 8A (441 aa).

Residues 24-92 (CDCSILVEGK…VYSGKLSLTG (69 aa)) form the BTB domain. The disordered stretch occupies residues 135-248 (LSDKDTGSNG…HVSQSEEQVQ (114 aa)). A phosphoserine mark is found at S161 and S167. Residues K178, K182, and K199 each participate in a glycyl lysine isopeptide (Lys-Gly) (interchain with G-Cter in SUMO2) cross-link. Basic and acidic residues-rich tracts occupy residues 198 to 208 (AKHEQRKDPIK) and 227 to 242 (GKGD…HVSQ). C2H2-type zinc fingers lie at residues 282–304 (FKCP…LRCH) and 310–333 (YPCQ…RTIH). Residue K437 forms a Glycyl lysine isopeptide (Lys-Gly) (interchain with G-Cter in SUMO2) linkage.

The protein resides in the nucleus. In terms of biological role, may be involved in transcriptional regulation. This Rattus norvegicus (Rat) protein is Zinc finger and BTB domain-containing protein 8A (Zbtb8a).